The following is a 181-amino-acid chain: Peptidyl-tRNA hydrolase (181 aa).

Y14 is a binding site for tRNA. Catalysis depends on H19, which acts as the Proton acceptor. Residues Y62, N64, and N108 each contribute to the tRNA site.

It belongs to the PTH family. In terms of assembly, monomer.

The protein resides in the cytoplasm. The enzyme catalyses an N-acyl-L-alpha-aminoacyl-tRNA + H2O = an N-acyl-L-amino acid + a tRNA + H(+). Functionally, hydrolyzes ribosome-free peptidyl-tRNAs (with 1 or more amino acids incorporated), which drop off the ribosome during protein synthesis, or as a result of ribosome stalling. Its function is as follows. Catalyzes the release of premature peptidyl moieties from peptidyl-tRNA molecules trapped in stalled 50S ribosomal subunits, and thus maintains levels of free tRNAs and 50S ribosomes. The sequence is that of Peptidyl-tRNA hydrolase from Campylobacter jejuni (strain RM1221).